The chain runs to 94 residues: Large ribosomal subunit protein uL23cz (94 aa).

The protein belongs to the universal ribosomal protein uL23 family. In terms of assembly, part of the 50S ribosomal subunit.

It is found in the plastid. The protein resides in the chloroplast. Binds to 23S rRNA. This Agrostis stolonifera (Creeping bentgrass) protein is Large ribosomal subunit protein uL23cz (rpl23-A).